We begin with the raw amino-acid sequence, 133 residues long: Napin-1 (133 aa).

2 propeptides span residues 31-49 and 131-133; these read PSWT…EKQG and PSY.

It belongs to the 2S seed storage albumins family. In terms of assembly, the mature protein consists of a small and a large chain linked by disulfide bonds. As to expression, cotyledons and the axis.

Its function is as follows. The small, basic, water-soluble napins are one of the two major kinds of storage proteins synthesized in the seed during its maturation. The protein is Napin-1 of Brassica napus (Rape).